The chain runs to 128 residues: Small ribosomal subunit protein uS13 (128 aa).

The tract at residues 97 to 128 is disordered; it reads PVRGQRTRSNARTRKGPRPSRIKTKKKKEQTV. Over residues 101–128 the composition is skewed to basic residues; sequence QRTRSNARTRKGPRPSRIKTKKKKEQTV.

This sequence belongs to the universal ribosomal protein uS13 family. Part of the 30S ribosomal subunit. Forms a loose heterodimer with protein S19. Forms two bridges to the 50S subunit in the 70S ribosome.

Functionally, located at the top of the head of the 30S subunit, it contacts several helices of the 16S rRNA. In the 70S ribosome it contacts the 23S rRNA (bridge B1a) and protein L5 of the 50S subunit (bridge B1b), connecting the 2 subunits; these bridges are implicated in subunit movement. Contacts the tRNAs in the A and P-sites. This is Small ribosomal subunit protein uS13 from Pseudothermotoga lettingae (strain ATCC BAA-301 / DSM 14385 / NBRC 107922 / TMO) (Thermotoga lettingae).